The following is an 84-amino-acid chain: Small ribosomal subunit protein uS17 (84 aa).

The protein belongs to the universal ribosomal protein uS17 family. Part of the 30S ribosomal subunit.

Its function is as follows. One of the primary rRNA binding proteins, it binds specifically to the 5'-end of 16S ribosomal RNA. The protein is Small ribosomal subunit protein uS17 of Sodalis glossinidius (strain morsitans).